A 798-amino-acid chain; its full sequence is Acetamidase regulatory protein (798 aa).

Residues 20–50 (CVHCHRRKVRCDARLVGLPCSNCRSAGKTDC) constitute a DNA-binding region (zn(2)-C6 fungal-type). Disordered stretches follow at residues 68–96 (VPIR…PPNA), 115–172 (ANRV…ESRA), and 632–714 (LRTT…TLSA). Composition is skewed to low complexity over residues 82–94 (KPIS…SEPP) and 133–147 (TRSN…QYQN). The segment covering 632 to 641 (LRTTTSDRPR) has biased composition (basic and acidic residues). The span at 644 to 663 (SNLSNNSTNSPASQQKNTSG) shows a compositional bias: polar residues. Pro residues predominate over residues 678 to 687 (PSAPSIPPLQ).

The protein resides in the nucleus. Positively regulates the expression of 5 genes involved in the catabolism of certain amides (amdS), omega amino acids (gatA and gabA), and lactams (lamA and lamB) in the presence of omega amino acid inducers. The protein is Acetamidase regulatory protein (amdR) of Emericella nidulans (strain FGSC A4 / ATCC 38163 / CBS 112.46 / NRRL 194 / M139) (Aspergillus nidulans).